A 370-amino-acid polypeptide reads, in one-letter code: MNRPYNFSAGPAAMPQEVLTEAAAEMLDWHGSGMSVMEMSHRGREFVSIYEQAHLDLRELLAVPDSFKILFMQGGGLAENAIVPLNLSARVSPAGAAGSADFVVTGGWSLKSQQEARKYCTVNIAASNESDGHTTLPGPASWQLSHGASYVHICSNETIHGVEYHTLPDLQALGSEAALVVDCSSHVASRPIDWSRVGLAFAGAQKNLGPAGLTLVVVREDLLGHALAVCPSAFNYKTVADNQSMFNTPPTYAIYIAGLVFQWLKRQGGIAAMEARNQAKAALLYDAIDNSQLYYNKVAPNCRSRMNVPFFLRDESLNDAFLAGAREHGLLQLKGHKSVGGMRASIYNAMPMEGVQALVNYLHEFQKRRS.

Arg-42 contacts L-glutamate. Pyridoxal 5'-phosphate contacts are provided by Trp-108, Thr-158, Asp-182, and Gln-205. Lys-206 carries the post-translational modification N6-(pyridoxal phosphate)lysine. A pyridoxal 5'-phosphate-binding site is contributed by 247-248 (NT).

It belongs to the class-V pyridoxal-phosphate-dependent aminotransferase family. SerC subfamily. As to quaternary structure, homodimer. The cofactor is pyridoxal 5'-phosphate.

It is found in the cytoplasm. It catalyses the reaction O-phospho-L-serine + 2-oxoglutarate = 3-phosphooxypyruvate + L-glutamate. It carries out the reaction 4-(phosphooxy)-L-threonine + 2-oxoglutarate = (R)-3-hydroxy-2-oxo-4-phosphooxybutanoate + L-glutamate. It functions in the pathway amino-acid biosynthesis; L-serine biosynthesis; L-serine from 3-phospho-D-glycerate: step 2/3. Its pathway is cofactor biosynthesis; pyridoxine 5'-phosphate biosynthesis; pyridoxine 5'-phosphate from D-erythrose 4-phosphate: step 3/5. Its function is as follows. Catalyzes the reversible conversion of 3-phosphohydroxypyruvate to phosphoserine and of 3-hydroxy-2-oxo-4-phosphonooxybutanoate to phosphohydroxythreonine. This is Phosphoserine aminotransferase from Albidiferax ferrireducens (strain ATCC BAA-621 / DSM 15236 / T118) (Rhodoferax ferrireducens).